The sequence spans 204 residues: Imidazoleglycerol-phosphate dehydratase (204 aa).

It belongs to the imidazoleglycerol-phosphate dehydratase family.

The protein localises to the cytoplasm. The catalysed reaction is D-erythro-1-(imidazol-4-yl)glycerol 3-phosphate = 3-(imidazol-4-yl)-2-oxopropyl phosphate + H2O. It functions in the pathway amino-acid biosynthesis; L-histidine biosynthesis; L-histidine from 5-phospho-alpha-D-ribose 1-diphosphate: step 6/9. In Albidiferax ferrireducens (strain ATCC BAA-621 / DSM 15236 / T118) (Rhodoferax ferrireducens), this protein is Imidazoleglycerol-phosphate dehydratase.